We begin with the raw amino-acid sequence, 253 residues long: Large ribosomal subunit protein uL4 (253 aa).

The interval 62 to 107 (WGSGRGVSHVPRLKNSSRAARVPHAKGGRRAHPPKPEADRSEKVNT) is disordered. Basic residues predominate over residues 82–94 (RVPHAKGGRRAHP). A compositionally biased stretch (basic and acidic residues) spans 95 to 107 (PKPEADRSEKVNT).

It belongs to the universal ribosomal protein uL4 family. As to quaternary structure, part of the 50S ribosomal subunit.

In terms of biological role, one of the primary rRNA binding proteins, this protein initially binds near the 5'-end of the 23S rRNA. It is important during the early stages of 50S assembly. It makes multiple contacts with different domains of the 23S rRNA in the assembled 50S subunit and ribosome. Its function is as follows. Forms part of the polypeptide exit tunnel. This is Large ribosomal subunit protein uL4 from Methanosarcina mazei (strain ATCC BAA-159 / DSM 3647 / Goe1 / Go1 / JCM 11833 / OCM 88) (Methanosarcina frisia).